The following is a 204-amino-acid chain: Inner membrane protein BB_0250 (204 aa).

Helical transmembrane passes span 17–37, 58–78, 101–121, 139–159, and 172–192; these read IAYS…NVPI, ILIF…SFYI, YYYG…PFGV, FIVS…TLSF, and IKII…IIYV.

This sequence belongs to the DedA family.

It is found in the cell inner membrane. Functionally, required for proper cell division and envelope integrity. The polypeptide is Inner membrane protein BB_0250 (Borreliella burgdorferi (strain ATCC 35210 / DSM 4680 / CIP 102532 / B31) (Borrelia burgdorferi)).